Reading from the N-terminus, the 299-residue chain is Ribosomal protein L11 methyltransferase (299 aa).

S-adenosyl-L-methionine contacts are provided by T152, G172, D194, and N234.

It belongs to the methyltransferase superfamily. PrmA family.

The protein resides in the cytoplasm. The enzyme catalyses L-lysyl-[protein] + 3 S-adenosyl-L-methionine = N(6),N(6),N(6)-trimethyl-L-lysyl-[protein] + 3 S-adenosyl-L-homocysteine + 3 H(+). Functionally, methylates ribosomal protein L11. The protein is Ribosomal protein L11 methyltransferase of Geobacter metallireducens (strain ATCC 53774 / DSM 7210 / GS-15).